The primary structure comprises 283 residues: ATP phosphoribosyltransferase (283 aa).

It belongs to the ATP phosphoribosyltransferase family. Long subfamily. In terms of assembly, equilibrium between an active dimeric form, an inactive hexameric form and higher aggregates. Interconversion between the various forms is largely reversible and is influenced by the natural substrates and inhibitors of the enzyme. Mg(2+) serves as cofactor.

It is found in the cytoplasm. The catalysed reaction is 1-(5-phospho-beta-D-ribosyl)-ATP + diphosphate = 5-phospho-alpha-D-ribose 1-diphosphate + ATP. It functions in the pathway amino-acid biosynthesis; L-histidine biosynthesis; L-histidine from 5-phospho-alpha-D-ribose 1-diphosphate: step 1/9. With respect to regulation, feedback inhibited by histidine. Functionally, catalyzes the condensation of ATP and 5-phosphoribose 1-diphosphate to form N'-(5'-phosphoribosyl)-ATP (PR-ATP). Has a crucial role in the pathway because the rate of histidine biosynthesis seems to be controlled primarily by regulation of HisG enzymatic activity. The chain is ATP phosphoribosyltransferase from Mycobacterium sp. (strain KMS).